Reading from the N-terminus, the 751-residue chain is Serine/threonine-protein kinase-like protein CCR4 (751 aa).

The N-terminal stretch at 1-31 (MALTISISCFSSYFVSLLLLVLSSFSFVCFS) is a signal peptide. Topologically, residues 32–366 (LSTVSISHIS…NKTWSRRNIA (335 aa)) are extracellular. 7 N-linked (GlcNAc...) asparagine glycosylation sites follow: asparagine 42, asparagine 51, asparagine 98, asparagine 243, asparagine 254, asparagine 283, and asparagine 357. A helical transmembrane segment spans residues 367–387 (FLVVGCVGTFSLLLVISFLIF). Topologically, residues 388–751 (KSHCRCRVHD…TETVSRSNTY (364 aa)) are cytoplasmic. Residues 443 to 733 (FSVRFHLGIG…EVVSKLESAL (291 aa)) form the Protein kinase domain. Residues 449–457 (LGIGSFGSV) and lysine 471 each bind ATP. The active-site Proton acceptor is aspartate 579.

The protein belongs to the protein kinase superfamily. Ser/Thr protein kinase family. Homodimer. As to expression, expressed in roots, leaves, especially in trichomes, shoot apical meristems (SAM), and, to a lower extent, in floral buds.

The protein resides in the membrane. The catalysed reaction is L-seryl-[protein] + ATP = O-phospho-L-seryl-[protein] + ADP + H(+). The enzyme catalyses L-threonyl-[protein] + ATP = O-phospho-L-threonyl-[protein] + ADP + H(+). The protein is Serine/threonine-protein kinase-like protein CCR4 (CCR4) of Arabidopsis thaliana (Mouse-ear cress).